Consider the following 129-residue polypeptide: MKVLEARDAYLTNAEVFFHLKEMENEQNARTQERGAAQALVCENLRTIQFEILKYLSSQGNCEGLTKERFLDCIAIFNEFELTKAEILVILNNKPSSVPELYACIEGIEERFKEEDIFKLVEKINTTFP.

Belongs to the eukaryotic RPC9 RNA polymerase subunit family. In terms of assembly, component of the RNA polymerase III (Pol III) complex.

It localises to the cytoplasm. It is found in the nucleus. DNA-dependent RNA polymerase catalyzes the transcription of DNA into RNA using the four ribonucleoside triphosphates as substrates. Specific peripheric component of RNA polymerase III which synthesizes small RNAs, such as 5S rRNA and tRNAs. The sequence is that of DNA-directed RNA polymerase III subunit rpc9 (rpc17) from Schizosaccharomyces pombe (strain 972 / ATCC 24843) (Fission yeast).